Reading from the N-terminus, the 1155-residue chain is Agglutinin-like protein 3 (1155 aa).

The signal sequence occupies residues 1–17 (MLQQYTLLLIYLSVATA). Intrachain disulfides connect cysteine 73–cysteine 150, cysteine 96–cysteine 112, cysteine 205–cysteine 298, and cysteine 227–cysteine 256. ALS repeat units follow at residues 365-396 (TTIT…VDIP), 401-432 (TTVT…VQVP), and 438-469 (VTTT…IREP). N-linked (GlcNAc...) asparagine glycosylation is present at asparagine 471. ALS repeat units lie at residues 474-505 (VTTT…IKEP) and 510-541 (VTTT…IREP). A glycan (N-linked (GlcNAc...) asparagine) is linked at asparagine 543. 2 ALS repeats span residues 546–577 (VTTT…IREP) and 582–613 (VTTT…IREP). Asparagine 615 carries an N-linked (GlcNAc...) asparagine glycan. The stretch at 618–649 (VTTTEYWSQSYATTTTITAPPGETDTVLIREP) is one ALS 8 repeat. A glycan (N-linked (GlcNAc...) asparagine) is linked at asparagine 651. 2 ALS repeats span residues 654–685 (VTTT…IKEP) and 690–721 (VTTT…IREP). N-linked (GlcNAc...) asparagine glycosylation is present at asparagine 723. One copy of the ALS 11 repeat lies at 726–757 (VTTTEYWSQSYATTTTITAPPGETDTVLIREP). N-linked (GlcNAc...) asparagine glycosylation is present at asparagine 759. Residues 762-793 (VTTTEYWSQSFATTTTVTAPPGGTDTVIIREP) form an ALS 12 repeat. Asparagine 795 is a glycosylation site (N-linked (GlcNAc...) asparagine). 2 ALS repeats span residues 798-829 (VTTT…IREP) and 834-863 (VTTT…VIIY). Asparagine 881 carries an N-linked (GlcNAc...) asparagine glycan. The tract at residues 936–1115 (TTTESTLQSP…NSDTQQTTLS (180 aa)) is disordered. A compositionally biased stretch (low complexity) spans 949–965 (FSESGVSVETESSTFTT). The segment covering 966–977 (AQTNPSVPTTES) has biased composition (polar residues). Low complexity predominate over residues 1010-1019 (TTSTAASTST). N-linked (GlcNAc...) asparagine glycosylation occurs at asparagine 1023. Low complexity-rich tracts occupy residues 1034–1058 (ASSP…STSV) and 1071–1115 (APSA…TTLS). Asparagine 1099 carries an N-linked (GlcNAc...) asparagine glycan. Serine 1134 is lipidated: GPI-anchor amidated serine. Residues 1135–1155 (GSVIQHSTWLCGLITLLSLFI) constitute a propeptide, removed in mature form.

The protein belongs to the ALS family. The GPI-anchor is attached to the protein in the endoplasmic reticulum and serves to target the protein to the cell surface. There, the glucosamine-inositol phospholipid moiety is cleaved off and the GPI-modified mannoprotein is covalently attached via its lipidless GPI glycan remnant to the 1,6-beta-glucan of the outer cell wall layer.

Its subcellular location is the cell membrane. The protein localises to the secreted. It is found in the cell wall. Functionally, cell surface adhesion protein which mediates both yeast-to-host tissue adherence and yeast aggregation. Plays an important role in the biofilm formation and pathogenesis of C.albicans infections. Necessary for C.albicans to bind to N-cadherin on endothelial cells and E-cadherin on oral epithelial cells and subsequent endocytosis by these cells. During disseminated infection, mediates initial trafficking to the brain and renal cortex and contributes to fungal persistence in the kidneys. This is Agglutinin-like protein 3 (ALS3) from Candida albicans (strain SC5314 / ATCC MYA-2876) (Yeast).